The primary structure comprises 61 residues: [Thr6, Val10, Asp11]-phyllokinin (61 aa).

The first 22 residues, 1 to 22 (MSFLKKSLFLVLFLGLVSFSIC), serve as a signal peptide directing secretion. The propeptide occupies 23–50 (EEEKRETEEEENEDEMNEESEEKRESPE). The interval 24 to 61 (EEKRETEEEENEDEMNEESEEKRESPERPPGFTPFRVD) is disordered. Over residues 30–42 (EEEENEDEMNEES) the composition is skewed to acidic residues.

This sequence belongs to the frog skin active peptide (FSAP) family. Bradykinin-related peptide subfamily. In terms of tissue distribution, expressed by the skin glands.

The protein resides in the secreted. Induces relaxation of rat smooth muscle from tail artery and contraction of that from ileum, urinary bladder and uterus. Binds to both bradykinin receptor B1 (BDKRB1) and B2 (BDKRB2). This is [Thr6, Val10, Asp11]-phyllokinin from Agalychnis spurrelli (Gliding leaf frog).